The sequence spans 152 residues: Large-conductance mechanosensitive channel (152 aa).

Transmembrane regions (helical) follow at residues 14–34 (VIDL…VTSL) and 81–101 (GLFL…FIAI).

This sequence belongs to the MscL family. As to quaternary structure, homopentamer.

The protein resides in the cell membrane. Its function is as follows. Channel that opens in response to stretch forces in the membrane lipid bilayer. May participate in the regulation of osmotic pressure changes within the cell. This chain is Large-conductance mechanosensitive channel, found in Clostridium perfringens (strain 13 / Type A).